Here is a 414-residue protein sequence, read N- to C-terminus: Serine hydroxymethyltransferase (414 aa).

(6S)-5,6,7,8-tetrahydrofolate contacts are provided by residues leucine 116 and glycine 120–leucine 122. N6-(pyridoxal phosphate)lysine is present on lysine 224. Residues glutamate 240 and serine 348 to phenylalanine 350 each bind (6S)-5,6,7,8-tetrahydrofolate.

The protein belongs to the SHMT family. In terms of assembly, homodimer. It depends on pyridoxal 5'-phosphate as a cofactor.

The protein resides in the cytoplasm. The enzyme catalyses (6R)-5,10-methylene-5,6,7,8-tetrahydrofolate + glycine + H2O = (6S)-5,6,7,8-tetrahydrofolate + L-serine. Its pathway is one-carbon metabolism; tetrahydrofolate interconversion. It participates in amino-acid biosynthesis; glycine biosynthesis; glycine from L-serine: step 1/1. Catalyzes the reversible interconversion of serine and glycine with tetrahydrofolate (THF) serving as the one-carbon carrier. This reaction serves as the major source of one-carbon groups required for the biosynthesis of purines, thymidylate, methionine, and other important biomolecules. Also exhibits THF-independent aldolase activity toward beta-hydroxyamino acids, producing glycine and aldehydes, via a retro-aldol mechanism. In Campylobacter fetus subsp. fetus (strain 82-40), this protein is Serine hydroxymethyltransferase.